Here is a 120-residue protein sequence, read N- to C-terminus: Large ribosomal subunit protein eL34 (120 aa).

Belongs to the eukaryotic ribosomal protein eL34 family.

This chain is Large ribosomal subunit protein eL34 (RPL34), found in Nicotiana tabacum (Common tobacco).